The following is a 1080-amino-acid chain: Headcase protein (1080 aa).

Disordered stretches follow at residues 1 to 27 (MAPRRNSNISSSGNSTQQQHQQQLQQQ), 181 to 277 (IYLN…GNNG), 310 to 335 (SLSSSGAGSGSTSPSDSQSSGEISVS), 655 to 693 (PLESPVGTGATTTQVPNAQGSPTASGCSSNTIASKQPPK), 798 to 826 (SKYQQQQHQQQQQQRQQQHNLQPQQQHAT), 891 to 916 (SGCSSGSGSQPSLSPTASSNGNDGSK), and 940 to 974 (QRQQPPQQQVPQQQPHAASPTASLTSSSSSSNGWS). Residues 181–197 (IYLNGSGNRPTLANGSL) show a composition bias toward polar residues. A compositionally biased stretch (gly residues) spans 218 to 228 (NGGGGGGGAGV). The segment covering 232-251 (TKTPLSNNNGNSYAGLTPNP) has biased composition (polar residues). The span at 263-277 (NNGNTASNGSSGNNG) shows a compositional bias: low complexity. Residues 663-688 (GATTTQVPNAQGSPTASGCSSNTIAS) are compositionally biased toward polar residues. The span at 801 to 826 (QQQQHQQQQQQRQQQHNLQPQQQHAT) shows a compositional bias: low complexity. The span at 900–913 (QPSLSPTASSNGND) shows a compositional bias: polar residues. The span at 941–974 (RQQPPQQQVPQQQPHAASPTASLTSSSSSSNGWS) shows a compositional bias: low complexity.

As to expression, expressed in all imaginal cells of the embryo and larvae. Expressed in a subset of tracheal fusion cells from stage 14 to the end of embryogenesis in metameres 2-9, lateral trunk and ventral anastomoses.

Its subcellular location is the cytoplasm. In terms of biological role, required for imaginal cell differentiation, may be involved in hormonal responsiveness during metamorphosis. Involved in an inhibitory signaling mechanism to determine the number of cells that will form unicellular sprouts in the trachea. Regulated by transcription factor esg. The longer hdc protein is completely functional and the shorter protein carries some function. In Drosophila melanogaster (Fruit fly), this protein is Headcase protein.